The sequence spans 336 residues: Large ribosomal subunit protein uL10 (336 aa).

Residues 305-336 (AVVATEEAPKAETKKEEKKEEAAPAAGLGLLF) are disordered. A compositionally biased stretch (basic and acidic residues) spans 311–326 (EAPKAETKKEEKKEEA).

The protein belongs to the universal ribosomal protein uL10 family. In terms of assembly, part of the 50S ribosomal subunit. Forms part of the ribosomal stalk which helps the ribosome interact with GTP-bound translation factors. Forms a heptameric L10(L12)2(L12)2(L12)2 complex, where L10 forms an elongated spine to which the L12 dimers bind in a sequential fashion.

Functionally, forms part of the ribosomal stalk, playing a central role in the interaction of the ribosome with GTP-bound translation factors. This chain is Large ribosomal subunit protein uL10, found in Methanococcus vannielii (strain ATCC 35089 / DSM 1224 / JCM 13029 / OCM 148 / SB).